The following is a 193-amino-acid chain: MRCPYCGGLDTQVKDSRPSEDASAIRRRRICPDCGGRFTTFERVQLRELTVVKRSGRKVPFDRDKLQRSIDVALRKRSVESDRIERLVSGITRQLESSGEPEVTSEAIGELVMEGLKGLDDVAYVRFASVYKNFREAKDFEELLGRLSADQQDGAVPQAEADRPIGAGPPSEAAQPAAGEGGDAPMRRARSRA.

The segment at 3-34 (CPYCGGLDTQVKDSRPSEDASAIRRRRICPDC) is a zinc-finger region. In terms of domain architecture, ATP-cone spans 49–139 (LTVVKRSGRK…VYKNFREAKD (91 aa)). Positions 150–193 (DQQDGAVPQAEADRPIGAGPPSEAAQPAAGEGGDAPMRRARSRA) are disordered.

This sequence belongs to the NrdR family. The cofactor is Zn(2+).

Functionally, negatively regulates transcription of bacterial ribonucleotide reductase nrd genes and operons by binding to NrdR-boxes. The sequence is that of Transcriptional repressor NrdR from Methylobacterium nodulans (strain LMG 21967 / CNCM I-2342 / ORS 2060).